Reading from the N-terminus, the 210-residue chain is UMP-CMP kinase 3 (210 aa).

34–39 contributes to the ATP binding site; sequence GSGKGT. The NMP stretch occupies residues 54–83; sequence SAGDLLRAEIKSGSENGTMIENMIKEGKIV. A ribonucleoside 5'-phosphate-binding positions include Arg60, 81–83, and 108–111; these read KIV and GFPR. CMP is bound at residue Asn115. An LID region spans residues 146-154; sequence GRNQGRVDD. Residue Arg147 participates in ATP binding. Residues Arg151 and Arg162 each contribute to the a ribonucleoside 5'-phosphate site. Lys190 contributes to the ATP binding site.

It belongs to the adenylate kinase family. UMP-CMP kinase subfamily. In terms of assembly, monomer. The cofactor is Mg(2+).

The protein resides in the cytoplasm. Its subcellular location is the nucleus. The enzyme catalyses UMP + ATP = UDP + ADP. The catalysed reaction is CMP + ATP = CDP + ADP. It catalyses the reaction dCMP + ATP = dCDP + ADP. Functionally, catalyzes the phosphorylation of pyrimidine nucleoside monophosphates at the expense of ATP. Plays an important role in de novo pyrimidine nucleotide biosynthesis. Has preference for UMP and CMP as phosphate acceptors. This Oryza sativa subsp. japonica (Rice) protein is UMP-CMP kinase 3 (URA6).